The sequence spans 478 residues: DNA gyrase subunit B (478 aa).

Residues 319 to 438 (CELYLVEGDS…QGYLYVALPP (120 aa)) enclose the Toprim domain. Residues Glu325, Asp403, and Asp405 each contribute to the Mg(2+) site.

This sequence belongs to the type II topoisomerase GyrB family. In terms of assembly, heterotetramer, composed of two GyrA and two GyrB chains. In the heterotetramer, GyrA contains the active site tyrosine that forms a transient covalent intermediate with DNA, while GyrB binds cofactors and catalyzes ATP hydrolysis. Requires Mg(2+) as cofactor. The cofactor is Mn(2+). It depends on Ca(2+) as a cofactor.

The protein resides in the cytoplasm. It catalyses the reaction ATP-dependent breakage, passage and rejoining of double-stranded DNA.. Functionally, a type II topoisomerase that negatively supercoils closed circular double-stranded (ds) DNA in an ATP-dependent manner to modulate DNA topology and maintain chromosomes in an underwound state. Negative supercoiling favors strand separation, and DNA replication, transcription, recombination and repair, all of which involve strand separation. Also able to catalyze the interconversion of other topological isomers of dsDNA rings, including catenanes and knotted rings. Type II topoisomerases break and join 2 DNA strands simultaneously in an ATP-dependent manner. The protein is DNA gyrase subunit B (gyrB) of Eisenibacter elegans (Flexibacter elegans).